The sequence spans 260 residues: Ribosomal RNA small subunit methyltransferase J (260 aa).

Residues 125–126 (ER) and aspartate 179 each bind S-adenosyl-L-methionine.

The protein belongs to the methyltransferase superfamily. RsmJ family.

It localises to the cytoplasm. The catalysed reaction is guanosine(1516) in 16S rRNA + S-adenosyl-L-methionine = N(2)-methylguanosine(1516) in 16S rRNA + S-adenosyl-L-homocysteine + H(+). In terms of biological role, specifically methylates the guanosine in position 1516 of 16S rRNA. The sequence is that of Ribosomal RNA small subunit methyltransferase J from Pseudomonas fluorescens (strain Pf0-1).